The chain runs to 396 residues: uncharacterized protein (396 aa).

2 helical membrane-spanning segments follow: residues Leu27–Leu47 and Phe69–Phe89. The HXXXXD motif motif lies at His117–Asp122. Helical transmembrane passes span Trp123–Leu143 and Leu372–Met392.

The protein belongs to the 1-acyl-sn-glycerol-3-phosphate acyltransferase family.

The protein localises to the membrane. This is an uncharacterized protein from Saccharomyces cerevisiae (strain ATCC 204508 / S288c) (Baker's yeast).